A 331-amino-acid chain; its full sequence is MKQTVYIASPESQQIHVWNLNHEGALTLTQVVDVPGQVQPMVVSPDKRYLYVGVRPEFRVLAYRIAPDDGALTFAAESALPGSPTHISTDHQGQFVFVGSYNAGNVSVTRLEDGLPVGVVDVVEGLDGCHSANISPDNRTLWVPALKQDRICLFTVSEDGHLVAQDPAEVTTVEGAGPRHMVFHPNEQYAYCVNELNSSVDVWELKDPHGNIECVQTLDMMPENFSDTRWAADIHITPDGRHLYACDRTASLITVFSVSEDGSVLSKEGFQPTETQPRGFNVDHSGKYLIAAGQKSHHISVYEIVGEQGLLHEKGRYAVGQGPMWVVVNAH.

Lys287 carries the N6-acetyllysine modification.

The protein belongs to the cycloisomerase 2 family.

The enzyme catalyses 6-phospho-D-glucono-1,5-lactone + H2O = 6-phospho-D-gluconate + H(+). Its pathway is carbohydrate degradation; pentose phosphate pathway; D-ribulose 5-phosphate from D-glucose 6-phosphate (oxidative stage): step 2/3. Functionally, catalyzes the hydrolysis of 6-phosphogluconolactone to 6-phosphogluconate. This Escherichia coli (strain SMS-3-5 / SECEC) protein is 6-phosphogluconolactonase.